The following is a 333-amino-acid chain: DNA-directed RNA polymerase subunit alpha (333 aa).

Positions 1–234 (MQSSVNEFLT…QQLAAFVDLK (234 aa)) are alpha N-terminal domain (alpha-NTD). Positions 248–333 (IDPILLRPVD…SLKKDDKATA (86 aa)) are alpha C-terminal domain (alpha-CTD).

It belongs to the RNA polymerase alpha chain family. Homodimer. The RNAP catalytic core consists of 2 alpha, 1 beta, 1 beta' and 1 omega subunit. When a sigma factor is associated with the core the holoenzyme is formed, which can initiate transcription.

The catalysed reaction is RNA(n) + a ribonucleoside 5'-triphosphate = RNA(n+1) + diphosphate. Its function is as follows. DNA-dependent RNA polymerase catalyzes the transcription of DNA into RNA using the four ribonucleoside triphosphates as substrates. The chain is DNA-directed RNA polymerase subunit alpha from Pseudomonas putida (Arthrobacter siderocapsulatus).